The primary structure comprises 182 residues: Ribosome maturation factor RimM (182 aa).

The region spanning 101–174 (QDEYFIHQLY…QIVVRLLPGL (74 aa)) is the PRC barrel domain.

It belongs to the RimM family. In terms of assembly, binds ribosomal protein uS19.

It is found in the cytoplasm. In terms of biological role, an accessory protein needed during the final step in the assembly of 30S ribosomal subunit, possibly for assembly of the head region. Essential for efficient processing of 16S rRNA. May be needed both before and after RbfA during the maturation of 16S rRNA. It has affinity for free ribosomal 30S subunits but not for 70S ribosomes. The sequence is that of Ribosome maturation factor RimM from Roseiflexus sp. (strain RS-1).